Consider the following 136-residue polypeptide: Ig heavy chain V-A2 region P-MU-3 (136 aa).

Residues 1–19 (METGLRWLLLVAVLKGVQC) form the signal peptide. Gln20 is subject to Pyrrolidone carboxylic acid. An Ig-like domain is found at 20–127 (QSVKESEGGL…ENEFFNAIWG (108 aa)).

In Oryctolagus cuniculus (Rabbit), this protein is Ig heavy chain V-A2 region P-MU-3.